Reading from the N-terminus, the 339-residue chain is Delta(9)-fatty-acid desaturase fat-6 (339 aa).

4 consecutive transmembrane segments (helical) span residues 52 to 72, 77 to 97, 195 to 215, and 219 to 241; these read VALF…LIFE, TVIF…AGAH, YFPL…VYFW, and AFIA…TWCI.

This sequence belongs to the fatty acid desaturase type 1 family. In terms of tissue distribution, expressed in the intestine in adult worms and in all four larval stages. Additional expression in the hypodermis in all life stages.

The protein localises to the membrane. The enzyme catalyses octadecanoyl-CoA + 2 Fe(II)-[cytochrome b5] + O2 + 2 H(+) = (9Z)-octadecenoyl-CoA + 2 Fe(III)-[cytochrome b5] + 2 H2O. The catalysed reaction is hexadecanoyl-CoA + 2 Fe(II)-[cytochrome b5] + O2 + 2 H(+) = (9Z)-hexadecenoyl-CoA + 2 Fe(III)-[cytochrome b5] + 2 H2O. It catalyses the reaction heptadecanoyl-CoA + 2 Fe(II)-[cytochrome b5] + O2 + 2 H(+) = (9Z)-heptadecenoyl-CoA + 2 Fe(III)-[cytochrome b5] + 2 H2O. It carries out the reaction (11E)-octadecenoyl-CoA + 2 Fe(II)-[cytochrome b5] + O2 + 2 H(+) = (9Z,11E)-octadecadienoyl-CoA + 2 Fe(III)-[cytochrome b5] + 2 H2O. It participates in lipid metabolism; monounsaturated fatty acid biosynthesis. Its pathway is lipid metabolism; fatty acid metabolism. Its function is as follows. Delta(9)-fatty acid desaturase that acts preferentially on stearoyl-CoA (octadecanoyl-CoA) producing the monounsaturated oleoyl-CoA ((9Z)-octadecenoyl-CoA), one of the most abundant monounsaturated fatty acid in Caenorhabditis elegans phospholipids and triacylglycerols. Also acts on palmitoyl-CoA (hexadecanoyl-CoA), heptadecanoyl-CoA and (11E)-octadecenoyl-CoA (trans-vaccenoyl-CoA), the monounsaturated fatty acids (MUFAs) produced are further used as substrates to synthesize polyunsaturated fatty acids (PUFAs) by several other desaturases and elongases. Unlike plants, Caenorhabditis elegans desaturases seem to use fatty acyl-CoAs as substrates. This chain is Delta(9)-fatty-acid desaturase fat-6 (fat-6), found in Caenorhabditis elegans.